The following is an 89-amino-acid chain: Small ribosomal subunit protein uS15 (89 aa).

It belongs to the universal ribosomal protein uS15 family. Part of the 30S ribosomal subunit. Forms a bridge to the 50S subunit in the 70S ribosome, contacting the 23S rRNA.

Functionally, one of the primary rRNA binding proteins, it binds directly to 16S rRNA where it helps nucleate assembly of the platform of the 30S subunit by binding and bridging several RNA helices of the 16S rRNA. In terms of biological role, forms an intersubunit bridge (bridge B4) with the 23S rRNA of the 50S subunit in the ribosome. This chain is Small ribosomal subunit protein uS15, found in Thermodesulfovibrio yellowstonii (strain ATCC 51303 / DSM 11347 / YP87).